The sequence spans 565 residues: uncharacterized protein (565 aa).

Positions 1 to 21 are cleaved as a signal peptide; the sequence is MKIPSQQVLLALPLLASPAQS. 2 N-linked (GlcNAc...) asparagine glycosylation sites follow: N46 and N88. The FAD-binding PCMH-type domain occupies 118–302; sequence QGIVPYYSVS…TSVTYKTHPK (185 aa). Position 155 is a pros-8alpha-FAD histidine (H155). 5 N-linked (GlcNAc...) asparagine glycosylation sites follow: N191, N314, N364, N371, and N484.

It belongs to the oxygen-dependent FAD-linked oxidoreductase family. FAD is required as a cofactor.

It is found in the secreted. This is an uncharacterized protein from Arthroderma benhamiae (strain ATCC MYA-4681 / CBS 112371) (Trichophyton mentagrophytes).